The chain runs to 134 residues: Translation initiation factor 2 subunit beta (134 aa).

This sequence belongs to the eIF-2-beta/eIF-5 family. In terms of assembly, heterotrimer composed of an alpha, a beta and a gamma chain.

Functionally, eIF-2 functions in the early steps of protein synthesis by forming a ternary complex with GTP and initiator tRNA. The polypeptide is Translation initiation factor 2 subunit beta (Pyrobaculum arsenaticum (strain DSM 13514 / JCM 11321 / PZ6)).